Here is a 467-residue protein sequence, read N- to C-terminus: Glutamate--tRNA ligase (467 aa).

Positions 10–20 match the 'HIGH' region motif; that stretch reads PSPTGYLHVGG. Zn(2+) contacts are provided by cysteine 99, cysteine 101, cysteine 126, and glutamate 128. The 'KMSKS' region signature appears at 237–241; that stretch reads RLSKR. Lysine 240 provides a ligand contact to ATP.

The protein belongs to the class-I aminoacyl-tRNA synthetase family. Glutamate--tRNA ligase type 1 subfamily. Monomer. Requires Zn(2+) as cofactor.

The protein resides in the cytoplasm. The enzyme catalyses tRNA(Glu) + L-glutamate + ATP = L-glutamyl-tRNA(Glu) + AMP + diphosphate. Catalyzes the attachment of glutamate to tRNA(Glu) in a two-step reaction: glutamate is first activated by ATP to form Glu-AMP and then transferred to the acceptor end of tRNA(Glu). The protein is Glutamate--tRNA ligase of Geotalea uraniireducens (strain Rf4) (Geobacter uraniireducens).